The sequence spans 195 residues: Pyruvoyl-dependent arginine decarboxylase AaxB (195 aa).

Residue Ser53 is modified to Pyruvic acid (Ser).

This sequence belongs to the pyruvoyl-dependent arginine decarboxylase family. Trimer of an alpha-beta dimer. The cofactor is pyruvate.

It localises to the cytoplasm. The catalysed reaction is L-arginine + H(+) = agmatine + CO2. In terms of biological role, part of the AaxABC system, catalyzes the decarboxylation of L-arginine. The arginine uptake by the bacterium in the macrophage may be a virulence factor against the host innate immune response. This Chlamydia abortus (strain DSM 27085 / S26/3) (Chlamydophila abortus) protein is Pyruvoyl-dependent arginine decarboxylase AaxB (aaxB).